A 621-amino-acid chain; its full sequence is tRNA uridine 5-carboxymethylaminomethyl modification enzyme MnmG (621 aa).

Residue 8 to 13 (GAGHAG) coordinates FAD. The segment at 199 to 227 (PRIDRRSVDYSRVEEQKGDENPPPFSFST) is disordered. The segment covering 200–218 (RIDRRSVDYSRVEEQKGDE) has biased composition (basic and acidic residues). 269 to 283 (GPRYCPSIEDKIFRF) serves as a coordination point for NAD(+).

This sequence belongs to the MnmG family. Homodimer. Heterotetramer of two MnmE and two MnmG subunits. The cofactor is FAD.

It localises to the cytoplasm. Functionally, NAD-binding protein involved in the addition of a carboxymethylaminomethyl (cmnm) group at the wobble position (U34) of certain tRNAs, forming tRNA-cmnm(5)s(2)U34. This Chlorobium luteolum (strain DSM 273 / BCRC 81028 / 2530) (Pelodictyon luteolum) protein is tRNA uridine 5-carboxymethylaminomethyl modification enzyme MnmG.